A 236-amino-acid chain; its full sequence is Small ribosomal subunit protein uS2c (236 aa).

It belongs to the universal ribosomal protein uS2 family.

Its subcellular location is the plastid. It localises to the chloroplast. The protein is Small ribosomal subunit protein uS2c (rps2) of Triticum aestivum (Wheat).